Reading from the N-terminus, the 156-residue chain is Rhombotin-1 (156 aa).

LIM zinc-binding domains are found at residues 22–84 and 86–148; these read KGCA…LFGT and GNCA…GHLN.

Expressed in the brain and not in the thymus.

Its subcellular location is the nucleus. May be involved in gene regulation within neural lineage cells potentially by direct DNA binding or by binding to other transcription factors. The protein is Rhombotin-1 (Lmo1) of Mus musculus (Mouse).